We begin with the raw amino-acid sequence, 216 residues long: 3-isopropylmalate dehydratase small subunit (216 aa).

The protein belongs to the LeuD family. LeuD type 1 subfamily. In terms of assembly, heterodimer of LeuC and LeuD.

The enzyme catalyses (2R,3S)-3-isopropylmalate = (2S)-2-isopropylmalate. Its pathway is amino-acid biosynthesis; L-leucine biosynthesis; L-leucine from 3-methyl-2-oxobutanoate: step 2/4. Catalyzes the isomerization between 2-isopropylmalate and 3-isopropylmalate, via the formation of 2-isopropylmaleate. In Acinetobacter baylyi (strain ATCC 33305 / BD413 / ADP1), this protein is 3-isopropylmalate dehydratase small subunit.